Here is a 538-residue protein sequence, read N- to C-terminus: Protein BFR2 (538 aa).

The interval 1-239 (MVKAKGRAKE…AKPMMAALST (239 aa)) is disordered. The span at 7–23 (RAKEFQDPDEPITKDYD) shows a compositional bias: basic and acidic residues. Composition is skewed to acidic residues over residues 80 to 105 (LEEE…PETA) and 172 to 222 (DSED…DEED). The stretch at 290–363 (YEAAEEAAIK…KWSRKVQSVN (74 aa)) forms a coiled coil.

Belongs to the AATF family.

The protein localises to the nucleus. It localises to the nucleolus. This Gibberella zeae (strain ATCC MYA-4620 / CBS 123657 / FGSC 9075 / NRRL 31084 / PH-1) (Wheat head blight fungus) protein is Protein BFR2 (BFR2).